The following is a 311-amino-acid chain: Aspartate carbamoyltransferase catalytic subunit (311 aa).

Residues arginine 55 and threonine 56 each contribute to the carbamoyl phosphate site. Lysine 85 lines the L-aspartate pocket. Carbamoyl phosphate contacts are provided by arginine 106, histidine 135, and glutamine 138. Positions 168 and 230 each coordinate L-aspartate. Positions 268 and 269 each coordinate carbamoyl phosphate.

This sequence belongs to the aspartate/ornithine carbamoyltransferase superfamily. ATCase family. Heterododecamer (2C3:3R2) of six catalytic PyrB chains organized as two trimers (C3), and six regulatory PyrI chains organized as three dimers (R2).

It carries out the reaction carbamoyl phosphate + L-aspartate = N-carbamoyl-L-aspartate + phosphate + H(+). Its pathway is pyrimidine metabolism; UMP biosynthesis via de novo pathway; (S)-dihydroorotate from bicarbonate: step 2/3. Its function is as follows. Catalyzes the condensation of carbamoyl phosphate and aspartate to form carbamoyl aspartate and inorganic phosphate, the committed step in the de novo pyrimidine nucleotide biosynthesis pathway. The polypeptide is Aspartate carbamoyltransferase catalytic subunit (Klebsiella pneumoniae subsp. pneumoniae (strain ATCC 700721 / MGH 78578)).